A 704-amino-acid polypeptide reads, in one-letter code: Elongation factor G 1 (704 aa).

In terms of domain architecture, tr-type G spans 8–291 (ERYRNIGISA…AVIDYLPSPA (284 aa)). GTP contacts are provided by residues 17-24 (AHIDAGKT), 88-92 (DTPGH), and 142-145 (NKMD).

Belongs to the TRAFAC class translation factor GTPase superfamily. Classic translation factor GTPase family. EF-G/EF-2 subfamily.

It localises to the cytoplasm. Functionally, catalyzes the GTP-dependent ribosomal translocation step during translation elongation. During this step, the ribosome changes from the pre-translocational (PRE) to the post-translocational (POST) state as the newly formed A-site-bound peptidyl-tRNA and P-site-bound deacylated tRNA move to the P and E sites, respectively. Catalyzes the coordinated movement of the two tRNA molecules, the mRNA and conformational changes in the ribosome. This chain is Elongation factor G 1, found in Burkholderia thailandensis (strain ATCC 700388 / DSM 13276 / CCUG 48851 / CIP 106301 / E264).